Reading from the N-terminus, the 220-residue chain is Protein CREG1 (220 aa).

Residues 1 to 31 form the signal peptide; the sequence is MAARAPELARSLLAALLAPALVALLVSPASG. The tract at residues 30–53 is disordered; it reads SGRGGRDHGDWDVDRRLPPLPPRE. Residues 33-53 are compositionally biased toward basic and acidic residues; it reads GGRDHGDWDVDRRLPPLPPRE. N-linked (GlcNAc...) asparagine glycosylation is found at Asn-160 and Asn-216.

This sequence belongs to the CREG family. In terms of assembly, homodimer. Interacts with IGF2R; the interaction is dependent on glycosylation. In terms of processing, N-glycosylated. As to expression, widely expressed.

The protein resides in the secreted. May contribute to the transcriptional control of cell growth and differentiation. Antagonizes transcriptional activation and cellular transformation by the adenovirus E1A protein. The transcriptional control activity of cell growth requires interaction with IGF2R. This Mus musculus (Mouse) protein is Protein CREG1 (Creg1).